The following is a 444-amino-acid chain: Protein phosphatase 2C homolog C10F6.17c (444 aa).

The PPM-type phosphatase domain occupies 85-439 (RYDFNQVASN…DDITVTVIFF (355 aa)). Mn(2+) is bound by residues Asp-121, Gly-122, and Asp-344.

This sequence belongs to the PP2C family. The cofactor is Mg(2+). Mn(2+) is required as a cofactor.

It localises to the mitochondrion. It carries out the reaction O-phospho-L-seryl-[protein] + H2O = L-seryl-[protein] + phosphate. The catalysed reaction is O-phospho-L-threonyl-[protein] + H2O = L-threonyl-[protein] + phosphate. Functionally, involved in regulation of pyruvate dehydrogenase activity. This Schizosaccharomyces pombe (strain 972 / ATCC 24843) (Fission yeast) protein is Protein phosphatase 2C homolog C10F6.17c.